The chain runs to 106 residues: Urease subunit beta (106 aa).

This sequence belongs to the urease beta subunit family. Heterotrimer of UreA (gamma), UreB (beta) and UreC (alpha) subunits. Three heterotrimers associate to form the active enzyme.

The protein localises to the cytoplasm. It catalyses the reaction urea + 2 H2O + H(+) = hydrogencarbonate + 2 NH4(+). It functions in the pathway nitrogen metabolism; urea degradation; CO(2) and NH(3) from urea (urease route): step 1/1. The polypeptide is Urease subunit beta (Alkalilimnicola ehrlichii (strain ATCC BAA-1101 / DSM 17681 / MLHE-1)).